The sequence spans 362 residues: Vignain (362 aa).

The first 20 residues, 1–20 (MATKKLLWVVLSFSLVLGVA), serve as a signal peptide directing secretion. A propeptide spans 21-131 (NSFDFHDKDL…YEKVVSVPPS (111 aa)) (activation peptide). 3 disulfides stabilise this stretch: cysteine 149-cysteine 191, cysteine 183-cysteine 224, and cysteine 282-cysteine 334. Cysteine 152 is an active-site residue. Catalysis depends on residues histidine 288 and asparagine 309. Residues asparagine 326 and asparagine 346 are each glycosylated (N-linked (GlcNAc...) asparagine). A Prevents secretion from ER motif is present at residues 359–362 (KDEL).

This sequence belongs to the peptidase C1 family. Monomer.

The protein localises to the endoplasmic reticulum lumen. In terms of biological role, thought to be involved in the hydrolysis of stored seed proteins. This chain is Vignain, found in Phaseolus vulgaris (Kidney bean).